The sequence spans 59 residues: Single-pass membrane and coiled-coil domain-containing protein 4 (59 aa).

A disordered region spans residues 1–27 (MRQLKGKPKKETSRDKKERKQAMQEAR). The segment covering 9–27 (KKETSRDKKERKQAMQEAR) has biased composition (basic and acidic residues). Residues 9 to 31 (KKETSRDKKERKQAMQEARRQIT) are a coiled coil. The chain crosses the membrane as a helical span at residues 32–52 (TVVLPTLAVVVLLIVVFVYVA).

It belongs to the SMCO4 family.

It localises to the membrane. This chain is Single-pass membrane and coiled-coil domain-containing protein 4 (SMCO4), found in Bos taurus (Bovine).